Here is a 231-residue protein sequence, read N- to C-terminus: 7-cyano-7-deazaguanine synthase (231 aa).

Residue 8-18 (FSGGQDSTTCL) participates in ATP binding. The Zn(2+) site is built by C188, C197, C200, and C203.

It belongs to the QueC family. Requires Zn(2+) as cofactor.

It catalyses the reaction 7-carboxy-7-deazaguanine + NH4(+) + ATP = 7-cyano-7-deazaguanine + ADP + phosphate + H2O + H(+). It functions in the pathway purine metabolism; 7-cyano-7-deazaguanine biosynthesis. Functionally, catalyzes the ATP-dependent conversion of 7-carboxy-7-deazaguanine (CDG) to 7-cyano-7-deazaguanine (preQ(0)). This is 7-cyano-7-deazaguanine synthase from Salmonella paratyphi A (strain ATCC 9150 / SARB42).